Reading from the N-terminus, the 381-residue chain is MSTKEATSETAVDYSLSNPETVNKYKIAGEVSQNVIKKVVELCQPGAKIYDICVRGDELLNEAIKKVYRTKDAYKGIAFPTAVSPNDMAAHLSPLKSDPEANLALKSGDVVKILLGAHIDGFASLVATTTVVSEEPVTGPAADVIAAASAALKAAQRTIKPGNTNWQVTDIVDKIATSYGCKPVAGMLSHQQEREVIDGKKQVILNPSDSQRSEMDTFTFEEGEVYGVDILVSTSPSGKVKRSDIATRIYKKTDTTYMLKLQASRKVYSEIQTKFGPFPFSTRNISFDSRTNMGLNECTSHKLLFPYEVLLDKDGGIVAEFYSTIALTKKGTIILSDSEPKEDFIKSDKKVEDPEIVALLETPIKVTKNKKKSKKPSKANE.

S8 is modified (phosphoserine). At T362 the chain carries Phosphothreonine. Positions 368–375 (KNKKKSKK) match the Nuclear localization signal motif.

This sequence belongs to the peptidase M24 family.

Its subcellular location is the nucleus. In terms of biological role, a non-essential protein that preferentially binds curved DNA. Binds non-curved DNA with a much lower affinity. The sequence is that of Curved DNA-binding protein (cdb4) from Schizosaccharomyces pombe (strain 972 / ATCC 24843) (Fission yeast).